We begin with the raw amino-acid sequence, 552 residues long: Glutamine--tRNA ligase (552 aa).

A 'HIGH' region motif is present at residues 34–44 (PEPNGYLHIGH). ATP is bound by residues 35–37 (EPN) and 41–47 (HIGHAKS). L-glutamine contacts are provided by Asp-67 and Tyr-212. ATP-binding positions include Thr-231, 261–262 (RL), and 269–271 (MSK). The 'KMSKS' region signature appears at 268–272 (VMSKR).

Belongs to the class-I aminoacyl-tRNA synthetase family. As to quaternary structure, monomer.

It localises to the cytoplasm. The catalysed reaction is tRNA(Gln) + L-glutamine + ATP = L-glutaminyl-tRNA(Gln) + AMP + diphosphate. The chain is Glutamine--tRNA ligase from Aliivibrio fischeri (strain MJ11) (Vibrio fischeri).